The following is a 164-amino-acid chain: MSMFLGTHQNRFDAKGRVSIPASFRAALKSQAQPGDPLVILRPSHLHPCIEGWTVGAFASLATPLDEYDPFSEDHEDLAASLYADAYPLDSDKEGRIILPENLRTHAALTDEVSFMGLGRTFQIWNPEAAAERRQAARSRARTLATSRRPASAPAAGNTAGAAE.

2 SpoVT-AbrB domains span residues 7–57 (THQN…TVGA) and 86–129 (AYPL…NPEA). Residues 133 to 164 (RRQAARSRARTLATSRRPASAPAAGNTAGAAE) form a disordered region. A compositionally biased stretch (low complexity) spans 142–164 (RTLATSRRPASAPAAGNTAGAAE).

The protein belongs to the MraZ family. Forms oligomers.

It is found in the cytoplasm. The protein localises to the nucleoid. This is Transcriptional regulator MraZ from Gluconobacter oxydans (strain 621H) (Gluconobacter suboxydans).